The primary structure comprises 398 residues: Substance-K receptor (398 aa).

The Extracellular portion of the chain corresponds to 1–32 (MGTCDIVTEANISSGPESNTTGITAFSMPSWQ). N-linked (GlcNAc...) asparagine glycosylation is found at N11 and N19. Residues 33–56 (LALWATAYLALVLVAVTGNAIVIW) form a helical membrane-spanning segment. The Cytoplasmic segment spans residues 57–69 (IILAHRRMRTVTN). A helical membrane pass occupies residues 70–90 (YFIVNLALADLCMAAFNAAFN). Over 91–107 (FVYASHNIWYFGRAFCY) the chain is Extracellular. C106 and C181 are disulfide-bonded. Residues 108–129 (FQNLFPITAMFVSIYSMTAIAA) form a helical membrane-spanning segment. The Cytoplasmic segment spans residues 130–149 (DRYMAIVHPFQPRLSAPSTK). A helical transmembrane segment spans residues 150 to 170 (AVIAGIWLVALALASPQCFYS). Over 171-196 (TVTMDQGATKCVVAWPEDSGGKTLLL) the chain is Extracellular. Residues 197–218 (YHLVVIALIYFLPLAVMFVAYS) form a helical membrane-spanning segment. At 219–251 (VIGLTLWRRAVPGHQAHGANLRHLQAMKKFVKT) the chain is on the cytoplasmic side. A helical transmembrane segment spans residues 252–272 (MVLVVLTFAICWLPYHLYFIL). Residues 273–290 (GSFQEDIYCHKFIQQVYL) lie on the Extracellular side of the membrane. Residues 291–310 (ALFWLAMSSTMYNPIIYCCL) form a helical membrane-spanning segment. Over 311-398 (NHRFRSGFRL…LAPTKTHVEI (88 aa)) the chain is Cytoplasmic. The S-palmitoyl cysteine moiety is linked to residue C324.

The protein belongs to the G-protein coupled receptor 1 family.

It is found in the cell membrane. This is a receptor for the tachykinin neuropeptide substance K (neurokinin A). It is associated with G proteins that activate a phosphatidylinositol-calcium second messenger system. The rank order of affinity of this receptor to tachykinins is: substance K &gt; neuromedin-K &gt; substance P. This is Substance-K receptor (TACR2) from Homo sapiens (Human).